Here is a 671-residue protein sequence, read N- to C-terminus: Pescadillo homolog (671 aa).

2 coiled-coil regions span residues 294–323 (NQAQ…ELFR) and 548–584 (QALR…TRKM). Residues 317-403 (KVRELFRGLT…LVLPVTGYRI (87 aa)) enclose the BRCT domain. Disordered regions lie at residues 552 to 577 (KAQE…VKRQ) and 634 to 671 (GLVN…KWVQ). The segment covering 634–651 (GLVNKRLEARRQRAEAKG) has biased composition (basic and acidic residues).

It belongs to the pescadillo family.

Its subcellular location is the nucleus. The protein localises to the nucleolus. It localises to the nucleoplasm. Functionally, required for maturation of ribosomal RNAs and formation of the large ribosomal subunit. The protein is Pescadillo homolog of Leishmania major.